A 319-amino-acid polypeptide reads, in one-letter code: Aliphatic sulfonates import ATP-binding protein SsuB (319 aa).

Residues 63 to 282 form the ABC transporter domain; it reads VTLSGVSKRF…ARASAAFAAL (220 aa). ATP is bound at residue 95–102; the sequence is GRSGCGKS.

Belongs to the ABC transporter superfamily. Aliphatic sulfonates importer (TC 3.A.1.17.2) family. In terms of assembly, the complex is composed of two ATP-binding proteins (SsuB), two transmembrane proteins (SsuC) and a solute-binding protein (SsuA).

It localises to the cell inner membrane. It catalyses the reaction ATP + H2O + aliphatic sulfonate-[sulfonate-binding protein]Side 1 = ADP + phosphate + aliphatic sulfonateSide 2 + [sulfonate-binding protein]Side 1.. Its function is as follows. Part of the ABC transporter complex SsuABC involved in aliphatic sulfonates import. Responsible for energy coupling to the transport system. In Burkholderia ambifaria (strain ATCC BAA-244 / DSM 16087 / CCUG 44356 / LMG 19182 / AMMD) (Burkholderia cepacia (strain AMMD)), this protein is Aliphatic sulfonates import ATP-binding protein SsuB.